The primary structure comprises 150 residues: Protein-export protein SecB (150 aa).

This sequence belongs to the SecB family. As to quaternary structure, homotetramer, a dimer of dimers. One homotetramer interacts with 1 SecA dimer.

The protein resides in the cytoplasm. Functionally, one of the proteins required for the normal export of preproteins out of the cell cytoplasm. It is a molecular chaperone that binds to a subset of precursor proteins, maintaining them in a translocation-competent state. It also specifically binds to its receptor SecA. This is Protein-export protein SecB from Acidovorax ebreus (strain TPSY) (Diaphorobacter sp. (strain TPSY)).